A 205-amino-acid chain; its full sequence is Ras-related and estrogen-regulated growth inhibitor-like protein (205 aa).

Residues 1-205 (MSNFLHLKYN…NVFGKRRKSV (205 aa)) form a small GTPase-like region. GTP-binding positions include 11–18 (EKSVSVTK), 58–64 (DPCSQTQ), and 123–126 (NKRD).

Belongs to the small GTPase superfamily. Ras family.

It catalyses the reaction GTP + H2O = GDP + phosphate + H(+). In terms of biological role, binds GDP/GTP and may possess intrinsic GTPase activity. The sequence is that of Ras-related and estrogen-regulated growth inhibitor-like protein (RERGL) from Homo sapiens (Human).